Reading from the N-terminus, the 382-residue chain is Mannitol-1-phosphate 5-dehydrogenase (382 aa).

Residue 3-14 (ALHFGAGNIGRG) participates in NAD(+) binding.

It belongs to the mannitol dehydrogenase family.

The catalysed reaction is D-mannitol 1-phosphate + NAD(+) = beta-D-fructose 6-phosphate + NADH + H(+). This is Mannitol-1-phosphate 5-dehydrogenase from Salmonella newport (strain SL254).